The primary structure comprises 286 residues: Nucleotide-binding protein HAPS_0087 (286 aa).

8–15 serves as a coordination point for ATP; it reads GRSGSGKS. 56–59 provides a ligand contact to GTP; the sequence is DVRN.

The protein belongs to the RapZ-like family.

Displays ATPase and GTPase activities. This chain is Nucleotide-binding protein HAPS_0087, found in Glaesserella parasuis serovar 5 (strain SH0165) (Haemophilus parasuis).